A 458-amino-acid polypeptide reads, in one-letter code: Glycogen synthase (458 aa).

Lys-15 lines the ADP-alpha-D-glucose pocket.

Belongs to the glycosyltransferase 1 family. Bacterial/plant glycogen synthase subfamily.

It carries out the reaction [(1-&gt;4)-alpha-D-glucosyl](n) + ADP-alpha-D-glucose = [(1-&gt;4)-alpha-D-glucosyl](n+1) + ADP + H(+). Its pathway is glycan biosynthesis; glycogen biosynthesis. Its function is as follows. Synthesizes alpha-1,4-glucan chains using ADP-glucose. In Gloeobacter violaceus (strain ATCC 29082 / PCC 7421), this protein is Glycogen synthase.